Here is a 495-residue protein sequence, read N- to C-terminus: Serine/threonine-protein phosphatase 2A regulatory subunit sur-6 (495 aa).

Residues 1 to 27 form a disordered region; sequence MVMEVDEPAVAATTSQNQPQEHANDFD. The segment covering 12–21 has biased composition (polar residues); sequence ATTSQNQPQE. WD repeat units lie at residues 64–103, 130–171, 215–253, 264–304, 323–361, and 378–419; these read TEAD…KYVK, EIDE…RKIG, AHTY…ESFN, ELTE…LCDA, EIIA…QPVE, and ENDS…DAKT. The segment at 439 to 459 is disordered; that stretch reads SAKRKRNNLSSSGETTEEDLS. Residues 464–495 form a WD 7 repeat; it reads QFDRKILHTAWHPKDNIIALAATNNLYIFSDV.

This sequence belongs to the phosphatase 2A regulatory subunit B family. In terms of assembly, part of a complex consisting of a common heterodimeric core enzyme, composed of catalytic subunit let-92 and constant regulatory subunit paa-1, that associates with a variety of regulatory subunits which confer distinct properties to the holoenzyme. Interacts with let-92.

It localises to the cytoplasm. Probable regulatory subunit of serine/threonine phosphatase let-92. Together with let-92 and constant regulatory subunit paa-1, positively regulates centriole duplication during early embryonic cell divisions by preventing the degradation of sas-5 and kinase zyg-1. In addition, during vulva development, may play a role with phosphatase let-92 and regulatory subunit paa-1 in the induction of vulva cell precursors by positively regulating let-60/Ras-MAP kinase signaling, probably by promoting lin-45 activation. In intestinal epithelial cells, may play a role in the late secretory pathway probably by regulating the exocyst, a protein complex involved in targeting secretory vesicles to the plasma membrane. The chain is Serine/threonine-protein phosphatase 2A regulatory subunit sur-6 from Caenorhabditis elegans.